A 174-amino-acid chain; its full sequence is CDP-archaeol synthase (174 aa).

The next 5 membrane-spanning stretches (helical) occupy residues 14–34, 59–79, 83–103, 118–138, and 149–169; these read ILEAIILMLPAMIANATPVVA, IEGLLAGFAAGSAAGVLAALA, MLLAVHSPAIALGALAGDMAG, APLLDQLDFYLGALAVSIALG, and AAAAVLLLHLAANITAYLLGL.

This sequence belongs to the CDP-archaeol synthase family. Requires Mg(2+) as cofactor.

The protein localises to the cell membrane. It carries out the reaction 2,3-bis-O-(geranylgeranyl)-sn-glycerol 1-phosphate + CTP + H(+) = CDP-2,3-bis-O-(geranylgeranyl)-sn-glycerol + diphosphate. The protein operates within membrane lipid metabolism; glycerophospholipid metabolism. Its function is as follows. Catalyzes the formation of CDP-2,3-bis-(O-geranylgeranyl)-sn-glycerol (CDP-archaeol) from 2,3-bis-(O-geranylgeranyl)-sn-glycerol 1-phosphate (DGGGP) and CTP. This reaction is the third ether-bond-formation step in the biosynthesis of archaeal membrane lipids. This chain is CDP-archaeol synthase, found in Aeropyrum pernix (strain ATCC 700893 / DSM 11879 / JCM 9820 / NBRC 100138 / K1).